A 109-amino-acid polypeptide reads, in one-letter code: Nucleoid-associated protein Asuc_0997 (109 aa).

The tract at residues 1–23 (MFGKGGLGGLMKQAQQMQERMQK) is disordered.

Belongs to the YbaB/EbfC family. In terms of assembly, homodimer.

It localises to the cytoplasm. The protein resides in the nucleoid. Its function is as follows. Binds to DNA and alters its conformation. May be involved in regulation of gene expression, nucleoid organization and DNA protection. In Actinobacillus succinogenes (strain ATCC 55618 / DSM 22257 / CCUG 43843 / 130Z), this protein is Nucleoid-associated protein Asuc_0997.